The following is a 368-amino-acid chain: (3S,6E)-nerolidol synthase (368 aa).

Residues Asp91, Asn228, and Ser232 each coordinate Mg(2+). The short motif at Asp91–Glu95 is the DDXXE motif element.

It belongs to the terpene synthase family. Mg(2+) is required as a cofactor. The cofactor is Mn(2+).

It catalyses the reaction (2E,6E)-farnesyl diphosphate + H2O = (3S,6E)-nerolidol + diphosphate. The catalysed reaction is (2E)-geranyl diphosphate + H2O = (S)-linalool + diphosphate. The protein operates within secondary metabolite biosynthesis; terpenoid biosynthesis. In terms of biological role, sesquiterpene synthase converting farnesyl diphosphate to nerolidol. Also has a monoterpene synthase activity, converting geranyl diphosphate into linalool as the major product. Has no diterpene synthase activity. The protein is (3S,6E)-nerolidol synthase of Selaginella moellendorffii (Spikemoss).